Here is a 198-residue protein sequence, read N- to C-terminus: Nucleoside triphosphate pyrophosphatase (198 aa).

The active-site Proton acceptor is the Asp-72.

It belongs to the Maf family. It depends on a divalent metal cation as a cofactor.

It localises to the cytoplasm. The catalysed reaction is a ribonucleoside 5'-triphosphate + H2O = a ribonucleoside 5'-phosphate + diphosphate + H(+). It carries out the reaction a 2'-deoxyribonucleoside 5'-triphosphate + H2O = a 2'-deoxyribonucleoside 5'-phosphate + diphosphate + H(+). Nucleoside triphosphate pyrophosphatase. May have a dual role in cell division arrest and in preventing the incorporation of modified nucleotides into cellular nucleic acids. The chain is Nucleoside triphosphate pyrophosphatase from Corynebacterium aurimucosum (strain ATCC 700975 / DSM 44827 / CIP 107346 / CN-1) (Corynebacterium nigricans).